Here is a 91-residue protein sequence, read N- to C-terminus: Class I hydrophobin 3 (91 aa).

The first 17 residues, 1–17, serve as a signal peptide directing secretion; that stretch reads MLFRLFTIPSIALGVLG. 4 cysteine pairs are disulfide-bonded: Cys-31–Cys-70, Cys-35–Cys-61, Cys-36–Cys-53, and Cys-71–Cys-87.

Belongs to the fungal hydrophobin family. As to quaternary structure, self-assembles to form functional amyloid fibrils called rodlets. Self-assembly into fibrillar rodlets occurs spontaneously at hydrophobic:hydrophilic interfaces and the rodlets further associate laterally to form amphipathic monolayers. In terms of tissue distribution, expressed in conidia.

It is found in the secreted. The protein resides in the cell wall. Aerial growth, conidiation, and dispersal of filamentous fungi in the environment rely upon a capability of their secreting small amphipathic proteins called hydrophobins (HPBs) with low sequence identity. Class I can self-assemble into an outermost layer of rodlet bundles on aerial cell surfaces, conferring cellular hydrophobicity that supports fungal growth, development and dispersal; whereas Class II form highly ordered films at water-air interfaces through intermolecular interactions but contribute nothing to the rodlet structure. HYD3 is a class I hydrophobin located on the conidial surface that activates specifically the humoral and cellular immunity of Metarhizium acridum's own host insect, Locusta migratoria manilensis (Meyen) but not that of other non-host insects. Improves the resistance of locusts to both specialist and generalist fungal pathogens (wide host range) when topically applied to the cuticle, but has no effect on the fungal resistance of other insects, including Spodoptera frugiperda and Galleria mellonella. This Metarhizium acridum (strain CQMa 102) protein is Class I hydrophobin 3.